Consider the following 306-residue polypeptide: Ribonuclease Z (306 aa).

His-63, His-65, Asp-67, His-68, His-141, Asp-211, and His-269 together coordinate Zn(2+). Catalysis depends on Asp-67, which acts as the Proton acceptor.

Belongs to the RNase Z family. In terms of assembly, homodimer. It depends on Zn(2+) as a cofactor.

It carries out the reaction Endonucleolytic cleavage of RNA, removing extra 3' nucleotides from tRNA precursor, generating 3' termini of tRNAs. A 3'-hydroxy group is left at the tRNA terminus and a 5'-phosphoryl group is left at the trailer molecule.. In terms of biological role, zinc phosphodiesterase, which displays some tRNA 3'-processing endonuclease activity. Probably involved in tRNA maturation, by removing a 3'-trailer from precursor tRNA. This is Ribonuclease Z from Macrococcus caseolyticus (strain JCSC5402) (Macrococcoides caseolyticum).